We begin with the raw amino-acid sequence, 904 residues long: Exo-beta-D-glucosaminidase (904 aa).

Positions 1–32 are cleaved as a signal peptide; it reads MFHRPASVRRFVTTAVALGLLSTLSTGARAGA. The interval 28-49 is disordered; that stretch reads ARAGARTHEPPPRPTTVSSTAG. The Proton donor role is filled by D476. The Nucleophile role is filled by E545. A compositionally biased stretch (low complexity) spans 813–828; it reads STTAGTDGASTTTVTV. Residues 813-833 are disordered; that stretch reads STTAGTDGASTTTVTVRNTGS.

It belongs to the glycosyl hydrolase 2 family. Monomer.

It localises to the secreted. The enzyme catalyses Hydrolysis of chitosan or chitosan oligosaccharides to remove successive D-glucosamine residues from the non-reducing termini.. Hydrolyzes chitosan and chitooligosaccharides with retention of anomeric configuration. Has no beta-mannosidase activity. The chain is Exo-beta-D-glucosaminidase from Streptomyces avermitilis (strain ATCC 31267 / DSM 46492 / JCM 5070 / NBRC 14893 / NCIMB 12804 / NRRL 8165 / MA-4680).